Here is an 82-residue protein sequence, read N- to C-terminus: Toxin Tpa7 (82 aa).

The signal sequence occupies residues 1–20 (MKGMILLISCLMLIEVVVEC). One can recognise an LCN-type CS-alpha/beta domain in the interval 21–82 (KEGYPLDTLN…KIWDLKKNKC (62 aa)). Disulfide bonds link Cys32–Cys82, Cys36–Cys58, Cys44–Cys63, and Cys48–Cys65.

This sequence belongs to the long (4 C-C) scorpion toxin superfamily. Sodium channel inhibitor family. Beta subfamily. In terms of tissue distribution, expressed by the venom gland.

Its subcellular location is the secreted. Its function is as follows. Beta toxins bind voltage-independently at site-4 of sodium channels (Nav) and shift the voltage of activation toward more negative potentials thereby affecting sodium channel activation and promoting spontaneous and repetitive firing. The chain is Toxin Tpa7 from Tityus pachyurus (Colombian scorpion).